Consider the following 473-residue polypeptide: Photosystem II CP43 reaction center protein (473 aa).

A propeptide spanning residues 1–14 (MKTLYSLRRFYPVE) is cleaved from the precursor. Position 15 is an N-acetylthreonine (Thr-15). At Thr-15 the chain carries Phosphothreonine. 5 helical membrane-spanning segments follow: residues 69 to 93 (LFEVAHFVPEKPMYEQGLILLPHLA), 134 to 155 (LLGPETLEESFPFFGYVWKDRN), 178 to 200 (KALYFGGVYDTWAPGGGDVRKIT), 255 to 275 (KPFAWARRAFVWSGEAYLSYS), and 291 to 312 (WFNNTAYPSEFYGPTGPEASQA). Glu-367 is a [CaMn4O5] cluster binding site. Residues 447–471 (RARAAAAGFEKGIDRDLEPVLSMTP) form a helical membrane-spanning segment.

It belongs to the PsbB/PsbC family. PsbC subfamily. PSII is composed of 1 copy each of membrane proteins PsbA, PsbB, PsbC, PsbD, PsbE, PsbF, PsbH, PsbI, PsbJ, PsbK, PsbL, PsbM, PsbT, PsbX, PsbY, PsbZ, Psb30/Ycf12, at least 3 peripheral proteins of the oxygen-evolving complex and a large number of cofactors. It forms dimeric complexes. Requires Binds multiple chlorophylls and provides some of the ligands for the Ca-4Mn-5O cluster of the oxygen-evolving complex. It may also provide a ligand for a Cl- that is required for oxygen evolution. PSII binds additional chlorophylls, carotenoids and specific lipids. as cofactor.

The protein localises to the plastid. It localises to the chloroplast thylakoid membrane. In terms of biological role, one of the components of the core complex of photosystem II (PSII). It binds chlorophyll and helps catalyze the primary light-induced photochemical processes of PSII. PSII is a light-driven water:plastoquinone oxidoreductase, using light energy to abstract electrons from H(2)O, generating O(2) and a proton gradient subsequently used for ATP formation. The protein is Photosystem II CP43 reaction center protein of Dioscorea elephantipes (Elephant's foot yam).